Reading from the N-terminus, the 153-residue chain is 6,7-dimethyl-8-ribityllumazine synthase (153 aa).

5-amino-6-(D-ribitylamino)uracil is bound by residues phenylalanine 22, 56–58 (AFE), and 80–82 (TVI). 85-86 (AT) lines the (2S)-2-hydroxy-3-oxobutyl phosphate pocket. The active-site Proton donor is the histidine 88. Phenylalanine 113 lines the 5-amino-6-(D-ribitylamino)uracil pocket. Arginine 127 contributes to the (2S)-2-hydroxy-3-oxobutyl phosphate binding site.

This sequence belongs to the DMRL synthase family.

The catalysed reaction is (2S)-2-hydroxy-3-oxobutyl phosphate + 5-amino-6-(D-ribitylamino)uracil = 6,7-dimethyl-8-(1-D-ribityl)lumazine + phosphate + 2 H2O + H(+). It participates in cofactor biosynthesis; riboflavin biosynthesis; riboflavin from 2-hydroxy-3-oxobutyl phosphate and 5-amino-6-(D-ribitylamino)uracil: step 1/2. Catalyzes the formation of 6,7-dimethyl-8-ribityllumazine by condensation of 5-amino-6-(D-ribitylamino)uracil with 3,4-dihydroxy-2-butanone 4-phosphate. This is the penultimate step in the biosynthesis of riboflavin. In Clostridium perfringens (strain 13 / Type A), this protein is 6,7-dimethyl-8-ribityllumazine synthase.